Consider the following 228-residue polypeptide: N-(5'-phosphoribosyl)anthranilate isomerase (228 aa).

It belongs to the TrpF family.

It carries out the reaction N-(5-phospho-beta-D-ribosyl)anthranilate = 1-(2-carboxyphenylamino)-1-deoxy-D-ribulose 5-phosphate. It functions in the pathway amino-acid biosynthesis; L-tryptophan biosynthesis; L-tryptophan from chorismate: step 3/5. The sequence is that of N-(5'-phosphoribosyl)anthranilate isomerase from Azorhizobium caulinodans (strain ATCC 43989 / DSM 5975 / JCM 20966 / LMG 6465 / NBRC 14845 / NCIMB 13405 / ORS 571).